Reading from the N-terminus, the 108-residue chain is Curli assembly protein CsgC (108 aa).

Positions 1 to 8 are cleaved as a signal peptide; it reads MHTLLLLA.

This sequence belongs to the CsgC/AgfC family.

The protein localises to the periplasm. Its function is as follows. Plays a role in the extracellular assembly of CsgA into thin aggregative fimbriae (Tafi) fibers. Assembly may also require CsgE. Tafi are thought to be assembled via an extracellular nucleation-precipitation (ENP) pathway, and possibly also via an intracellular non-CsgC-dependent pathway. The protein is Curli assembly protein CsgC of Salmonella arizonae (strain ATCC BAA-731 / CDC346-86 / RSK2980).